A 156-amino-acid chain; its full sequence is Ribosomal RNA large subunit methyltransferase H (156 aa).

S-adenosyl-L-methionine-binding positions include L73, G104, and 123–128; that span reads LSALTM.

Belongs to the RNA methyltransferase RlmH family. In terms of assembly, homodimer.

It localises to the cytoplasm. It carries out the reaction pseudouridine(1915) in 23S rRNA + S-adenosyl-L-methionine = N(3)-methylpseudouridine(1915) in 23S rRNA + S-adenosyl-L-homocysteine + H(+). In terms of biological role, specifically methylates the pseudouridine at position 1915 (m3Psi1915) in 23S rRNA. The polypeptide is Ribosomal RNA large subunit methyltransferase H (Tolumonas auensis (strain DSM 9187 / NBRC 110442 / TA 4)).